A 101-amino-acid chain; its full sequence is Pore-forming peptide amoebapore C (101 aa).

The N-terminal stretch at 1-24 (MKLFVLLCVFVLCLASQEKQQDRE) is a signal peptide. One can recognise a Saposin B-type domain in the interval 25 to 101 (IPVLCPVCTS…KLICGLIHAC (77 aa)). 3 cysteine pairs are disulfide-bonded: C29-C101, C32-C95, and C59-C70.

Monomer. Homodimer. Hexamer; formed during insertion in the membrane.

It localises to the cytoplasmic granule. Functionally, forms pores in the cell membrane of host cells. Has antibacterial activity against M.luteus, no activity against E.coli. Implicated in the cytolytic activity of the parasite. The chain is Pore-forming peptide amoebapore C from Entamoeba histolytica (strain ATCC 30459 / HM-1:IMSS / ABRM).